A 619-amino-acid polypeptide reads, in one-letter code: DNA mismatch repair protein MutL (619 aa).

The protein belongs to the DNA mismatch repair MutL/HexB family.

Its function is as follows. This protein is involved in the repair of mismatches in DNA. It is required for dam-dependent methyl-directed DNA mismatch repair. May act as a 'molecular matchmaker', a protein that promotes the formation of a stable complex between two or more DNA-binding proteins in an ATP-dependent manner without itself being part of a final effector complex. This is DNA mismatch repair protein MutL from Shewanella frigidimarina (strain NCIMB 400).